The sequence spans 838 residues: Valine--tRNA ligase (838 aa).

The 'HIGH' region motif lies at 46 to 56 (PNLTGTLHIGH). The 'KMSKS' region signature appears at 514–518 (KMSKS). Residue Lys-517 coordinates ATP. A coiled-coil region spans residues 768–838 (VDNAANNLAH…HLIAKLTKAE (71 aa)).

This sequence belongs to the class-I aminoacyl-tRNA synthetase family. ValS type 1 subfamily. In terms of assembly, monomer.

It is found in the cytoplasm. It catalyses the reaction tRNA(Val) + L-valine + ATP = L-valyl-tRNA(Val) + AMP + diphosphate. Its function is as follows. Catalyzes the attachment of valine to tRNA(Val). As ValRS can inadvertently accommodate and process structurally similar amino acids such as threonine, to avoid such errors, it has a 'posttransfer' editing activity that hydrolyzes mischarged Thr-tRNA(Val) in a tRNA-dependent manner. This Mycoplasma pneumoniae (strain ATCC 29342 / M129 / Subtype 1) (Mycoplasmoides pneumoniae) protein is Valine--tRNA ligase.